The chain runs to 342 residues: Tetraacyldisaccharide 4'-kinase (342 aa).

68–75 (TVGGTGKT) contributes to the ATP binding site.

This sequence belongs to the LpxK family.

It carries out the reaction a lipid A disaccharide + ATP = a lipid IVA + ADP + H(+). It functions in the pathway glycolipid biosynthesis; lipid IV(A) biosynthesis; lipid IV(A) from (3R)-3-hydroxytetradecanoyl-[acyl-carrier-protein] and UDP-N-acetyl-alpha-D-glucosamine: step 6/6. Its function is as follows. Transfers the gamma-phosphate of ATP to the 4'-position of a tetraacyldisaccharide 1-phosphate intermediate (termed DS-1-P) to form tetraacyldisaccharide 1,4'-bis-phosphate (lipid IVA). The chain is Tetraacyldisaccharide 4'-kinase from Burkholderia multivorans (strain ATCC 17616 / 249).